The primary structure comprises 400 residues: Formate-dependent phosphoribosylglycinamide formyltransferase (400 aa).

Residues 22-23 (EL) and Glu-82 contribute to the N(1)-(5-phospho-beta-D-ribosyl)glycinamide site. Residues Arg-115, Lys-156, 161-166 (SSGKGQ), 196-199 (EGFI), and Glu-204 each bind ATP. An ATP-grasp domain is found at 120–309 (RLAAETLGLP…EFALHARAIL (190 aa)). Residues Glu-268 and Glu-280 each contribute to the Mg(2+) site. N(1)-(5-phospho-beta-D-ribosyl)glycinamide is bound by residues Asp-287, Lys-361, and 368–369 (RR).

It belongs to the PurK/PurT family. As to quaternary structure, homodimer.

The enzyme catalyses N(1)-(5-phospho-beta-D-ribosyl)glycinamide + formate + ATP = N(2)-formyl-N(1)-(5-phospho-beta-D-ribosyl)glycinamide + ADP + phosphate + H(+). The protein operates within purine metabolism; IMP biosynthesis via de novo pathway; N(2)-formyl-N(1)-(5-phospho-D-ribosyl)glycinamide from N(1)-(5-phospho-D-ribosyl)glycinamide (formate route): step 1/1. In terms of biological role, involved in the de novo purine biosynthesis. Catalyzes the transfer of formate to 5-phospho-ribosyl-glycinamide (GAR), producing 5-phospho-ribosyl-N-formylglycinamide (FGAR). Formate is provided by PurU via hydrolysis of 10-formyl-tetrahydrofolate. This is Formate-dependent phosphoribosylglycinamide formyltransferase from Xanthomonas campestris pv. campestris (strain 8004).